The sequence spans 256 residues: GTP cyclohydrolase FolE2 (256 aa).

This sequence belongs to the GTP cyclohydrolase IV family.

It catalyses the reaction GTP + H2O = 7,8-dihydroneopterin 3'-triphosphate + formate + H(+). It functions in the pathway cofactor biosynthesis; 7,8-dihydroneopterin triphosphate biosynthesis; 7,8-dihydroneopterin triphosphate from GTP: step 1/1. In terms of biological role, converts GTP to 7,8-dihydroneopterin triphosphate. In Caldicellulosiruptor saccharolyticus (strain ATCC 43494 / DSM 8903 / Tp8T 6331), this protein is GTP cyclohydrolase FolE2.